The primary structure comprises 442 residues: SPRY domain-containing protein 3 (442 aa).

The B30.2/SPRY domain maps to 17-204; it reads DLNLHYRFLN…VRLHLNAELG (188 aa). The segment at 371–394 is disordered; it reads EGEEEEEEEEEEEDGEEIEPEHEG. The span at 372 to 390 shows a compositional bias: acidic residues; sequence GEEEEEEEEEEEDGEEIEP.

In Homo sapiens (Human), this protein is SPRY domain-containing protein 3 (SPRYD3).